A 318-amino-acid chain; its full sequence is NLP effector protein 7 (318 aa).

Positions 1 to 19 are cleaved as a signal peptide; sequence MRLFAFLWSSVAFLSTVQA. The segment covering 23–41 has biased composition (low complexity); the sequence is QTASQTQDDSSTPTPTPTD. Disordered stretches follow at residues 23 to 42 and 51 to 96; these read QTASQTQDDSSTPTPTPTDK and RTKT…TPDP. Positions 55–65 are enriched in polar residues; sequence PMATPNRTIMP. Residue N60 is glycosylated (N-linked (GlcNAc...) asparagine). Positions 73 to 96 are enriched in pro residues; it reads TEPPTPEPTYLPTPSPTPAPTPDP. Residues 185–195 carry the Conserved undecapeptide motif I motif; that stretch reads AIMYSWYFPKD. The Hepta-peptide GHRHDWE motif II signature appears at 202-208; it reads GHRHDWE.

This sequence belongs to the Necrosis inducing protein (NPP1) family.

The protein localises to the secreted. In terms of biological role, secreted effector that contributes moderately to virulence during infection by P.capsici. Does not cause visible reaction of C.annuum for several days after inoculation, but by 7 days after inoculation, small necrotic lesions become visible. Leads only to chlorotic areas, without necrosis at 7 days after non-host N.benthamiana leaves infection. The sequence is that of NLP effector protein 7 from Phytophthora capsici.